The following is a 170-amino-acid chain: Transcriptional repressor NrdR (170 aa).

A zinc finger spans residues 3 to 34 (CPFCRHPDSRVVDSRVTDDGTAIRRRRSCPEC). Residues 46–136 (LSVIKRSGVI…VYRGFESLED (91 aa)) enclose the ATP-cone domain. A disordered region spans residues 151-170 (ERSETVERGRPVPSRGVDDR).

It belongs to the NrdR family. Zn(2+) is required as a cofactor.

Negatively regulates transcription of bacterial ribonucleotide reductase nrd genes and operons by binding to NrdR-boxes. This chain is Transcriptional repressor NrdR, found in Acidothermus cellulolyticus (strain ATCC 43068 / DSM 8971 / 11B).